Consider the following 468-residue polypeptide: Putative FBD-associated F-box protein At5g22720 (468 aa).

An F-box domain is found at 22-68 (EDLISQLPDSLITQILFYLQTKKAVTTSVLSKRWRSLWLSTPGLVLI). Residues 375–433 (ELRLSFVPRCLLSSLEFVEIKGCSRSNMERVKYVGEPIETKLARYFVENSTILKKLVLP) enclose the FBD domain.

The protein is Putative FBD-associated F-box protein At5g22720 of Arabidopsis thaliana (Mouse-ear cress).